The chain runs to 2511 residues: Chromodomain-helicase-DNA-binding protein 8 (2511 aa).

Residues 484 to 615 (PRVLNQDELP…RSNRQVKRKK (132 aa)) form a disordered region. The segment covering 515–524 (GGGVGGGGGG) has biased composition (gly residues). Residues 604 to 615 (KRRSNRQVKRKK) show a composition bias toward basic residues. Chromo domains lie at 680–745 (AIVD…AQMR) and 760–826 (VEVD…RTPR). The Helicase ATP-binding domain occupies 859–1033 (LFNWYNRQNC…FSLLHFLEPA (175 aa)). 872–879 (DEMGLGKT) serves as a coordination point for ATP. The short motif at 984–987 (DEAH) is the DEAH box element. Residues 1174 to 1330 (LLDKLLPRLK…SMSGNKESSI (157 aa)) form the Helicase C-terminal domain. Disordered stretches follow at residues 1440–1482 (TRQF…HSGG), 1715–1736 (EQQA…SEDP), 2086–2168 (SKNN…LTDP), and 2468–2511 (PSAL…SSED). Acidic residues predominate over residues 1452–1461 (DLSDLDSDDD). The span at 2111 to 2125 (DSGSSSSSRHSGSSD) shows a compositional bias: low complexity.

The protein belongs to the SNF2/RAD54 helicase family. CHD8 subfamily. Component of some MLL1/MLL complex.

Its subcellular location is the nucleus. The enzyme catalyses ATP + H2O = ADP + phosphate + H(+). Functionally, ATP-dependent chromatin-remodeling factor, it slides nucleosomes along DNA; nucleosome sliding requires ATP. Acts as a transcription repressor by remodeling chromatin structure and recruiting histone H1 to target genes. Suppresses p53/tp53-mediated apoptosis by recruiting histone H1 and preventing p53/tp53 transactivation activity. Acts as a negative regulator of Wnt signaling pathway by regulating beta-catenin (ctnnb1) activity. Negatively regulates ctnnb1-targeted gene expression by being recruited specifically to the promoter regions of several ctnnb1 responsive genes. May also act as a transcription activator by participating in efficient U6 RNA polymerase III transcription. This Danio rerio (Zebrafish) protein is Chromodomain-helicase-DNA-binding protein 8.